Reading from the N-terminus, the 568-residue chain is Putative ABC transporter ATP-binding protein CPE1583 (568 aa).

ABC transporter domains lie at 7–248 (IEFK…GIRE) and 303–536 (LEFK…ASLK). ATP-binding positions include 41-48 (GPSGSGKS) and 336-343 (GKNGAGKS).

It belongs to the ABC transporter superfamily.

Its subcellular location is the cell membrane. Probably part of an ABC transporter complex. Responsible for energy coupling to the transport system. The sequence is that of Putative ABC transporter ATP-binding protein CPE1583 from Clostridium perfringens (strain 13 / Type A).